Reading from the N-terminus, the 230-residue chain is Ribonuclease 3 (230 aa).

In terms of domain architecture, RNase III spans 6 to 135; the sequence is VSELRARYGI…FNGALFLDQG (130 aa). Glu48 provides a ligand contact to Mg(2+). Residue Asp52 is part of the active site. Residues Asp121 and Glu124 each contribute to the Mg(2+) site. Glu124 is a catalytic residue. A DRBM domain is found at 161 to 230; that stretch reads DYKTNLQEFL…AKKALEQLKA (70 aa).

The protein belongs to the ribonuclease III family. In terms of assembly, homodimer. It depends on Mg(2+) as a cofactor.

It is found in the cytoplasm. It catalyses the reaction Endonucleolytic cleavage to 5'-phosphomonoester.. Its function is as follows. Digests double-stranded RNA. Involved in the processing of primary rRNA transcript to yield the immediate precursors to the large and small rRNAs (23S and 16S). Processes some mRNAs, and tRNAs when they are encoded in the rRNA operon. Processes pre-crRNA and tracrRNA of type II CRISPR loci if present in the organism. The chain is Ribonuclease 3 from Latilactobacillus sakei subsp. sakei (strain 23K) (Lactobacillus sakei subsp. sakei).